The following is a 422-amino-acid chain: MWEFVKQTDPEIYEVIMKEWERQEYGLELIASENFVSPAVMEAMGSVLTNKYAEGYPKKRYYGGCEWVDVAENLARERAKKLFNAKYANVQPHSGSQANMGAYFALAEPGSTLMGMSLSHGGHLTHGASVNFSGQIYKVVQYGVNPQTETIDYDEVRKLALEHKPKIIVAGGSAYSRIIDFKKFREIADEVGAYLVVDMAHFAGLVAAGIYPNPLEYAHVVTSTTHKTLRGPRGGLILTNDEEIYKAINKAIFPGIQGGPLMHVIAAKAVCFKEALSDEFKAYQNQIVKNAKALAKALENRGLRIVSGGTDTHLMLVDLNPLNVTGKAAETALGYCHITVNKNTIPNETRSPFVASGIRLGTPALTTRGMKEEQMEEIADLIVTVLKNVKDEEGNVDEEVAKRVSDRVIELCKQFPLYVGKI.

Residues L118 and 122-124 (GHL) each bind (6S)-5,6,7,8-tetrahydrofolate. K227 carries the N6-(pyridoxal phosphate)lysine modification. (6S)-5,6,7,8-tetrahydrofolate-binding positions include E243 and 351–353 (SPF).

This sequence belongs to the SHMT family. Homodimer. It depends on pyridoxal 5'-phosphate as a cofactor.

The protein resides in the cytoplasm. It catalyses the reaction (6R)-5,10-methylene-5,6,7,8-tetrahydrofolate + glycine + H2O = (6S)-5,6,7,8-tetrahydrofolate + L-serine. Its pathway is one-carbon metabolism; tetrahydrofolate interconversion. It functions in the pathway amino-acid biosynthesis; glycine biosynthesis; glycine from L-serine: step 1/1. Functionally, catalyzes the reversible interconversion of serine and glycine with tetrahydrofolate (THF) serving as the one-carbon carrier. This reaction serves as the major source of one-carbon groups required for the biosynthesis of purines, thymidylate, methionine, and other important biomolecules. Also exhibits THF-independent aldolase activity toward beta-hydroxyamino acids, producing glycine and aldehydes, via a retro-aldol mechanism. This Fervidobacterium nodosum (strain ATCC 35602 / DSM 5306 / Rt17-B1) protein is Serine hydroxymethyltransferase.